Consider the following 1452-residue polypeptide: ABC-type transporter adrC (1452 aa).

The tract at residues 1–38 (MAPEEGDQAMSHEDKAACSSLNTTSSTELFDGAPSSEN) is disordered. The span at 19–28 (SSLNTTSSTE) shows a compositional bias: polar residues. Residues 116 to 378 (KRLMSIVGNK…FETMGWKRPP (263 aa)) enclose the ABC transporter 1 domain. The next 6 membrane-spanning stretches (helical) occupy residues 487 to 507 (IPAL…IGSL), 524 to 544 (VLFL…TTLY), 569 to 589 (VIVD…IVYF), 598 to 618 (SHFF…ATIF), 631 to 651 (AMAL…FTVP), and 738 to 758 (GILV…TELI). The 243-residue stretch at 813 to 1055 (FSWKGLSYDI…TVLEYLEDKG (243 aa)) folds into the ABC transporter 2 domain. 849 to 856 (GVSGAGKT) contributes to the ATP binding site. 7 helical membrane passes run 1149–1169 (YILA…FSFW), 1181–1201 (VLFS…QIMP), 1224–1244 (VFIL…GICT), 1264–1284 (LVLL…QLVV), 1287–1307 (VPSV…CLLF), 1322–1344 (IFMN…ALHG), and 1415–1435 (FGIF…LYYL).

The protein belongs to the ABC transporter superfamily. ABCG family. PDR (TC 3.A.1.205) subfamily.

The protein resides in the membrane. In terms of biological role, ABC-type transporter; part of the gene cluster that mediates the biosynthesis of the meroterpenoid compound andrastin A, a promising antitumoral compound. Is required for the production of andrastin A but does not have a significant role in its secretion. The chain is ABC-type transporter adrC from Penicillium roqueforti.